An 886-amino-acid chain; its full sequence is Alanine--tRNA ligase (886 aa).

Zn(2+)-binding residues include histidine 570, histidine 574, cysteine 673, and histidine 677.

Belongs to the class-II aminoacyl-tRNA synthetase family. The cofactor is Zn(2+).

The protein resides in the cytoplasm. The catalysed reaction is tRNA(Ala) + L-alanine + ATP = L-alanyl-tRNA(Ala) + AMP + diphosphate. Its function is as follows. Catalyzes the attachment of alanine to tRNA(Ala) in a two-step reaction: alanine is first activated by ATP to form Ala-AMP and then transferred to the acceptor end of tRNA(Ala). Also edits incorrectly charged Ser-tRNA(Ala) and Gly-tRNA(Ala) via its editing domain. This Chlorobium chlorochromatii (strain CaD3) protein is Alanine--tRNA ligase.